The sequence spans 518 residues: MTLAEFWPLCLRRLHDMLPQGQFAQWIAPLTVGEEGGVWVVYGKNQFACNMLKSQFAGKIEAVREELAAGRSAFVFKPGEGVRYEMAAVEGAVEPAEPSLHAVSEGMPVQEVLLDELPSEEPVKPAASKTAADILAERMKNLPHEPRQAAGSASRPESVAVAKARTDVQRDAEEARYEQTNLSPDYTFDTLVEGKGNRLAAAAAQAIAESPGQSYNPFFLYGSTGLGKTHLVQAVGNELLKNRPDAKVRYMHSDDYIRSFMKAVRNNTYDVFKQQYKQYDLLIIDDIQFIKGKDRTMEEFFYLYNHFHNEKKQLILTCDVLPAKIEGMDDRLKSRFSWGLTLELEPPELEMRIAILQKKAEAAGISIEDEAALFIANLIRSNVRELEGAFNRVGASSRFMNRPVIDIDLARTALQDIIAEKHKVITADIIIDAVAKYYRIKISDVLGKKRTRNIARPRQVAMSLTKELTTLSLPSIGDSFGGRDHTTVMHGIRAVAKLREEDPELAQDYEKLLILIQN.

The segment at 1 to 72 (MTLAEFWPLC…VREELAAGRS (72 aa)) is domain I, interacts with DnaA modulators. Positions 72 to 180 (SAFVFKPGEG…DAEEARYEQT (109 aa)) are domain II. The disordered stretch occupies residues 145 to 172 (EPRQAAGSASRPESVAVAKARTDVQRDA). The interval 181–397 (NLSPDYTFDT…GAFNRVGASS (217 aa)) is domain III, AAA+ region. Positions 225, 227, 228, and 229 each coordinate ATP. Residues 398–518 (RFMNRPVIDI…YEKLLILIQN (121 aa)) form a domain IV, binds dsDNA region.

This sequence belongs to the DnaA family. In terms of assembly, oligomerizes as a right-handed, spiral filament on DNA at oriC.

The protein resides in the cytoplasm. Plays an essential role in the initiation and regulation of chromosomal replication. ATP-DnaA binds to the origin of replication (oriC) to initiate formation of the DNA replication initiation complex once per cell cycle. Binds the DnaA box (a 9 base pair repeat at the origin) and separates the double-stranded (ds)DNA. Forms a right-handed helical filament on oriC DNA; dsDNA binds to the exterior of the filament while single-stranded (ss)DNA is stabiized in the filament's interior. The ATP-DnaA-oriC complex binds and stabilizes one strand of the AT-rich DNA unwinding element (DUE), permitting loading of DNA polymerase. After initiation quickly degrades to an ADP-DnaA complex that is not apt for DNA replication. Binds acidic phospholipids. The polypeptide is Chromosomal replication initiator protein DnaA (Neisseria meningitidis serogroup B (strain ATCC BAA-335 / MC58)).